The chain runs to 548 residues: MHLVRWLICLIQLWVQLGAAGSVTLLDPLLIEIPNGKLRGRDNGHYYSYEAIPYAEPPTGELRFEVPKPYKQQWTNTFDATQPPVLCMQWNQFINGTNKLLGVEDCLTVSVYRPKNSSRNNFPVVANLHGGAFMFGGPSQYGHENIMREGSVILVTIGYRLGPLGFVSTGDADLSGNFGLKDQRLALLWIKQNIASFGGEPENILVVGHSAGGASVHLQMLREDFSKLAKAAISFSGNALDPWVIQQGLRGRAFELGRIVGCGQASDSGTLKKCLKSKPAIEIVSAVRSFLVFSYVPFTPFGPAIESPDAPEAFITQHPIDIIKSGKFSQVPWAVTYTTEDGGYNAALLLEKQASSGRELIVDLNDRWFDWAPYLLFYRDSMTTIKDMDDYSRKLRQEYLGDRRFSVESYWDVQRMFTDLLFKNSVTVSVDLHRKYGKSPVYAFVYDNPSEVGVGQILSGRNDVYFGTVHGDDVFLIFNVSFVPANRRPDEEIISRNFIKMLEYFALSTDDTMAYGDCVFQNNVGSKHMQLLSITRDGCENKQLNCFI.

A signal peptide spans 1 to 21; it reads MHLVRWLICLIQLWVQLGAAG. A disulfide bridge links cysteine 87 with cysteine 106. Asparagine 95 and asparagine 116 each carry an N-linked (GlcNAc...) asparagine glycan. The active-site Acyl-ester intermediate is the serine 210. Residues cysteine 262 and cysteine 274 are joined by a disulfide bond. Asparagine 479 carries N-linked (GlcNAc...) asparagine glycosylation. A disulfide bridge links cysteine 518 with cysteine 539.

The protein belongs to the type-B carboxylesterase/lipase family.

It localises to the secreted. The enzyme catalyses a carboxylic ester + H2O = an alcohol + a carboxylate + H(+). The chain is Esterase-5A (Est-5A) from Drosophila pseudoobscura pseudoobscura (Fruit fly).